An 856-amino-acid chain; its full sequence is Putative zinc protease C28F5.4 (856 aa).

A Zn(2+)-binding site is contributed by H71. E74 serves as the catalytic Proton acceptor. Positions 75 and 152 each coordinate Zn(2+).

Belongs to the peptidase M16 family.

The protein is Putative zinc protease C28F5.4 of Caenorhabditis elegans.